A 335-amino-acid chain; its full sequence is Transmembrane protein 120B-A (335 aa).

Residues 1–40 adopt a coiled-coil conformation; sequence MSLQKCQEEWSEIEKEFQQLQETHKVYKQKLEELNSLQNL. A run of 6 helical transmembrane segments spans residues 100–122, 130–150, 157–177, 193–213, 268–288, and 300–320; these read GLYL…AKFA, FKLY…FVLN, VFNF…SILI, VSTF…YQIF, FLLP…ITLF, and QVFV…LTTL.

This sequence belongs to the TMEM120 family.

Its subcellular location is the nucleus inner membrane. Necessary for efficient adipogenesis. Does not show ion channel activity. The chain is Transmembrane protein 120B-A (tmem120b-a) from Xenopus laevis (African clawed frog).